The chain runs to 215 residues: Redox-sensing transcriptional repressor Rex (215 aa).

Residues 18 to 57 (LYYRFLKNLHASGKQRVSSAELSEAVKVDPATIRRDFSYF) constitute a DNA-binding region (H-T-H motif). 92–97 (GVGNLG) is an NAD(+) binding site.

The protein belongs to the transcriptional regulatory Rex family. In terms of assembly, homodimer.

It is found in the cytoplasm. Its function is as follows. Modulates transcription in response to changes in cellular NADH/NAD(+) redox state. This Geobacillus sp. (strain WCH70) protein is Redox-sensing transcriptional repressor Rex.